A 143-amino-acid polypeptide reads, in one-letter code: MSIKQHRPKVGEILECDYGQFSHTCHVDGHIPPEMVKKRLVVVLNAKLNGLILVAPISSKINLDGIKNGYHIEIDSELIKATGFYDKRTRWIKSELIQSVSRLRLYHIYDKGTKITQYLPRDVVTKVQRAIIKAINASSLLDK.

The protein to E.coli YifN.

This is an uncharacterized protein from Haemophilus influenzae (strain ATCC 51907 / DSM 11121 / KW20 / Rd).